A 546-amino-acid polypeptide reads, in one-letter code: Probable protein kinase UbiB (546 aa).

Residues Asp124 to Phe502 enclose the Protein kinase domain. Residues Leu130–Val138 and Lys153 each bind ATP. Residue Asp288 is the Proton acceptor of the active site. 2 consecutive transmembrane segments (helical) span residues Tyr501–Pro521 and Glu522–Trp542.

Belongs to the ABC1 family. UbiB subfamily.

The protein localises to the cell inner membrane. The protein operates within cofactor biosynthesis; ubiquinone biosynthesis [regulation]. Functionally, is probably a protein kinase regulator of UbiI activity which is involved in aerobic coenzyme Q (ubiquinone) biosynthesis. In Shigella boydii serotype 18 (strain CDC 3083-94 / BS512), this protein is Probable protein kinase UbiB.